The following is a 197-amino-acid chain: Signal peptidase complex catalytic subunit SEC11 (197 aa).

At M1–Q14 the chain is on the cytoplasmic side. A helical; Signal-anchor for type II membrane protein membrane pass occupies residues T15 to W33. Over K34–E197 the chain is Lumenal. N41 carries N-linked (GlcNAc...) asparagine glycosylation. Residues S53 and H92 each act as charge relay system in the active site. The span at P102 to E115 shows a compositional bias: basic and acidic residues. Residues P102–N134 are disordered. D139 acts as the Charge relay system in catalysis. The interval V183–L194 is C-terminal short (CTS) helix.

It belongs to the peptidase S26B family. As to quaternary structure, component of the signal peptidase complex (SPC) composed of a catalytic subunit SEC11 and three accessory subunits SPC1, SPC2 and SPC3. The complex induces a local thinning of the ER membrane which is used to measure the length of the signal peptide (SP) h-region of protein substrates. This ensures the selectivity of the complex towards h-regions shorter than 18-20 amino acids. SPC associates with the translocon complex.

It localises to the endoplasmic reticulum membrane. The catalysed reaction is Cleavage of hydrophobic, N-terminal signal or leader sequences from secreted and periplasmic proteins.. Catalytic component of the signal peptidase complex (SPC) which catalyzes the cleavage of N-terminal signal sequences from nascent proteins as they are translocated into the lumen of the endoplasmic reticulum. Specifically cleaves N-terminal signal peptides that contain a hydrophobic alpha-helix (h-region) shorter than 18-20 amino acids. This is Signal peptidase complex catalytic subunit SEC11 (SEC11) from Paracoccidioides lutzii (strain ATCC MYA-826 / Pb01) (Paracoccidioides brasiliensis).